A 186-amino-acid chain; its full sequence is Small ribosomal subunit protein eS7 (186 aa).

It belongs to the eukaryotic ribosomal protein eS7 family. As to quaternary structure, component of the small ribosomal subunit. Mature ribosomes consist of a small (40S) and a large (60S) subunit. The 40S subunit contains about 32 different proteins and 1 molecule of RNA (18S). The 60S subunit contains 45 different proteins and 3 molecules of RNA (25S, 5.8S and 5S).

Its subcellular location is the cytoplasm. Component of the ribosome, a large ribonucleoprotein complex responsible for the synthesis of proteins in the cell. The small ribosomal subunit (SSU) binds messenger RNAs (mRNAs) and translates the encoded message by selecting cognate aminoacyl-transfer RNA (tRNA) molecules. The large subunit (LSU) contains the ribosomal catalytic site termed the peptidyl transferase center (PTC), which catalyzes the formation of peptide bonds, thereby polymerizing the amino acids delivered by tRNAs into a polypeptide chain. The nascent polypeptides leave the ribosome through a tunnel in the LSU and interact with protein factors that function in enzymatic processing, targeting, and the membrane insertion of nascent chains at the exit of the ribosomal tunnel. RPS7A is involved in nucleolar processing of pre-18S ribosomal RNA and ribosome assembly. The polypeptide is Small ribosomal subunit protein eS7 (RPS7A) (Candida albicans (strain SC5314 / ATCC MYA-2876) (Yeast)).